Here is a 347-residue protein sequence, read N- to C-terminus: Heat-inducible transcription repressor HrcA (347 aa).

This sequence belongs to the HrcA family.

Functionally, negative regulator of class I heat shock genes (grpE-dnaK-dnaJ and groELS operons). Prevents heat-shock induction of these operons. The chain is Heat-inducible transcription repressor HrcA from Sorangium cellulosum (strain So ce56) (Polyangium cellulosum (strain So ce56)).